The primary structure comprises 313 residues: HPr kinase/phosphorylase (313 aa).

Active-site residues include His140 and Lys161. Position 155-162 (155-162 (GDSGVGKS)) interacts with ATP. Mg(2+) is bound at residue Ser162. Residue Asp179 is the Proton acceptor; for phosphorylation activity. Proton donor; for dephosphorylation activity of the active site. The interval 203 to 212 (LEIRGIGIID) is important for the catalytic mechanism of both phosphorylation and dephosphorylation. Residue Glu204 participates in Mg(2+) binding. The active site involves Arg245. Residues 266 to 271 (PVKVGR) form an important for the catalytic mechanism of dephosphorylation region.

The protein belongs to the HPrK/P family. Homohexamer. Mg(2+) is required as a cofactor.

The catalysed reaction is [HPr protein]-L-serine + ATP = [HPr protein]-O-phospho-L-serine + ADP + H(+). It carries out the reaction [HPr protein]-O-phospho-L-serine + phosphate + H(+) = [HPr protein]-L-serine + diphosphate. In terms of biological role, catalyzes the ATP- as well as the pyrophosphate-dependent phosphorylation of a specific serine residue in HPr, a phosphocarrier protein of the phosphoenolpyruvate-dependent sugar phosphotransferase system (PTS). HprK/P also catalyzes the pyrophosphate-producing, inorganic phosphate-dependent dephosphorylation (phosphorolysis) of seryl-phosphorylated HPr (P-Ser-HPr). The two antagonistic activities of HprK/P are regulated by several intracellular metabolites, which change their concentration in response to the absence or presence of rapidly metabolisable carbon sources (glucose, fructose, etc.) in the growth medium. Therefore, by controlling the phosphorylation state of HPr, HPrK/P is a sensor enzyme that plays a major role in the regulation of carbon metabolism and sugar transport: it mediates carbon catabolite repression (CCR), and regulates PTS-catalyzed carbohydrate uptake and inducer exclusion. In Latilactobacillus sakei subsp. sakei (strain 23K) (Lactobacillus sakei subsp. sakei), this protein is HPr kinase/phosphorylase.